Consider the following 260-residue polypeptide: (+)-borneol dehydrogenase 1 (260 aa).

Residues 20-26, Asp44, 67-68, and 94-96 contribute to the NAD(+) site; these read GGASGIG, DV, and NAG. The active-site Proton donor is the Ser148. NAD(+)-binding residues include Tyr161, Lys165, and Thr196. Tyr161 functions as the Proton acceptor in the catalytic mechanism. Residue Lys165 is the Proton donor/acceptor of the active site.

It belongs to the short-chain dehydrogenases/reductases (SDR) family.

The catalysed reaction is (1R,2S,4R)-borneol + NAD(+) = (1R,4R)-camphor + NADH + H(+). Functionally, involved in the biosynthesis of monoterpene natural products related to camphor. Catalayzes the oxidation of (+)-borneol to (+)-camphor. Shows absolute selectivity towards (+)-borneol. Catalyzes the oxidation of (+)-isoborneol to (-)-camphor. Shows absolute selectivity towards (+)-isoborneol. This chain is (+)-borneol dehydrogenase 1, found in Salvia officinalis (Sage).